Reading from the N-terminus, the 29-residue chain is Dermaseptin-H7 (29 aa).

L29 carries the post-translational modification Leucine amide.

This sequence belongs to the frog skin active peptide (FSAP) family. Dermaseptin subfamily. As to expression, expressed by the skin glands.

Its subcellular location is the secreted. Functionally, has antibacterial activity against the Gram-negative bacterium E.coli and the Gram-positive bacterium S.aureus. Has antiprotozoal activity against L.amazonensis. Has antifungal activity. Has no hemolytic activity. The sequence is that of Dermaseptin-H7 from Pithecopus hypochondrialis (Orange-legged leaf frog).